The following is a 418-amino-acid chain: MSLLVIGINHTSATVDLREKVAFSPDKLTKALDELKNSDAIKSGVILSTCNRTEIYCEVKLGISSGYVINWLAEFHHVALDLLMPSIYIYEEQAAVKHLMRVSCGLDSLVLGEPQILGQVKKAFADAREHNAVEGVVEKLFQSDFSVAKRVRTETNIGGNAVSVAYAACTLARQIFESLAESTVMLVGAGETIELVAKHLNDAGCKQLIVANRTRERAMILADQFNADVISLPEIPEHLSKADIIISSTASPLPIIGKGMVESALKQRRHQPMLFVDIAVPRDIESEVADLNDVYLYSVDDLKSIIDHNIEQRKIEAIQAEAIVSEESAGFMTWIRSRQAVNSIRQYRENSESIRIELLQKSIQALASGQNAEKVLAELSNKLTNKLIHAPTLAMQQAAKNGEPDKLAVIRTSIGLDN.

Residues 49-52, S108, 113-115, and Q119 contribute to the substrate site; these read TCNR and EPQ. The active-site Nucleophile is C50. Position 188-193 (188-193) interacts with NADP(+); sequence GAGETI.

It belongs to the glutamyl-tRNA reductase family. In terms of assembly, homodimer.

It carries out the reaction (S)-4-amino-5-oxopentanoate + tRNA(Glu) + NADP(+) = L-glutamyl-tRNA(Glu) + NADPH + H(+). The protein operates within porphyrin-containing compound metabolism; protoporphyrin-IX biosynthesis; 5-aminolevulinate from L-glutamyl-tRNA(Glu): step 1/2. Its function is as follows. Catalyzes the NADPH-dependent reduction of glutamyl-tRNA(Glu) to glutamate 1-semialdehyde (GSA). The polypeptide is Glutamyl-tRNA reductase (Aliivibrio salmonicida (strain LFI1238) (Vibrio salmonicida (strain LFI1238))).